We begin with the raw amino-acid sequence, 447 residues long: Exodeoxyribonuclease 7 large subunit (447 aa).

This sequence belongs to the XseA family. As to quaternary structure, heterooligomer composed of large and small subunits.

It is found in the cytoplasm. It catalyses the reaction Exonucleolytic cleavage in either 5'- to 3'- or 3'- to 5'-direction to yield nucleoside 5'-phosphates.. Its function is as follows. Bidirectionally degrades single-stranded DNA into large acid-insoluble oligonucleotides, which are then degraded further into small acid-soluble oligonucleotides. This chain is Exodeoxyribonuclease 7 large subunit, found in Exiguobacterium sibiricum (strain DSM 17290 / CCUG 55495 / CIP 109462 / JCM 13490 / 255-15).